Reading from the N-terminus, the 530-residue chain is Autoinducer-2 kinase (530 aa).

This sequence belongs to the FGGY kinase family.

The protein localises to the cytoplasm. The enzyme catalyses (S)-4,5-dihydroxypentane-2,3-dione + ATP = (2S)-2-hydroxy-3,4-dioxopentyl phosphate + ADP + H(+). Functionally, catalyzes the phosphorylation of autoinducer-2 (AI-2) to phospho-AI-2, which subsequently inactivates the transcriptional regulator LsrR and leads to the transcription of the lsr operon. Phosphorylates the ring-open form of (S)-4,5-dihydroxypentane-2,3-dione (DPD), which is the precursor to all AI-2 signaling molecules, at the C5 position. The sequence is that of Autoinducer-2 kinase from Yersinia pseudotuberculosis serotype O:1b (strain IP 31758).